Here is a 245-residue protein sequence, read N- to C-terminus: Carboxy-S-adenosyl-L-methionine synthase (245 aa).

S-adenosyl-L-methionine contacts are provided by residues Tyr39, 64–66 (GSS), 117–118 (DI), and Arg199.

Belongs to the class I-like SAM-binding methyltransferase superfamily. Cx-SAM synthase family. In terms of assembly, homodimer.

It catalyses the reaction prephenate + S-adenosyl-L-methionine = carboxy-S-adenosyl-L-methionine + 3-phenylpyruvate + H2O. In terms of biological role, catalyzes the conversion of S-adenosyl-L-methionine (SAM) to carboxy-S-adenosyl-L-methionine (Cx-SAM). The protein is Carboxy-S-adenosyl-L-methionine synthase of Desulfotalea psychrophila (strain LSv54 / DSM 12343).